The chain runs to 381 residues: Queuine tRNA-ribosyltransferase (381 aa).

Asp90 acts as the Proton acceptor in catalysis. Residues 90–94, Asp144, Gln193, and Gly221 each bind substrate; that span reads DSGGF. The segment at 252 to 258 is RNA binding; it reads GVGTPEN. The Nucleophile role is filled by Asp271. Residues 276–280 form an RNA binding; important for wobble base 34 recognition region; that stretch reads TRNAR. Residues Cys309, Cys311, Cys314, and His340 each coordinate Zn(2+).

It belongs to the queuine tRNA-ribosyltransferase family. As to quaternary structure, homodimer. Within each dimer, one monomer is responsible for RNA recognition and catalysis, while the other monomer binds to the replacement base PreQ1. It depends on Zn(2+) as a cofactor.

It carries out the reaction 7-aminomethyl-7-carbaguanine + guanosine(34) in tRNA = 7-aminomethyl-7-carbaguanosine(34) in tRNA + guanine. It participates in tRNA modification; tRNA-queuosine biosynthesis. In terms of biological role, catalyzes the base-exchange of a guanine (G) residue with the queuine precursor 7-aminomethyl-7-deazaguanine (PreQ1) at position 34 (anticodon wobble position) in tRNAs with GU(N) anticodons (tRNA-Asp, -Asn, -His and -Tyr). Catalysis occurs through a double-displacement mechanism. The nucleophile active site attacks the C1' of nucleotide 34 to detach the guanine base from the RNA, forming a covalent enzyme-RNA intermediate. The proton acceptor active site deprotonates the incoming PreQ1, allowing a nucleophilic attack on the C1' of the ribose to form the product. After dissociation, two additional enzymatic reactions on the tRNA convert PreQ1 to queuine (Q), resulting in the hypermodified nucleoside queuosine (7-(((4,5-cis-dihydroxy-2-cyclopenten-1-yl)amino)methyl)-7-deazaguanosine). The polypeptide is Queuine tRNA-ribosyltransferase (Helicobacter hepaticus (strain ATCC 51449 / 3B1)).